The following is a 78-amino-acid chain: Acyl carrier protein BQ2027_MB0103 (78 aa).

Positions 1-78 (MRDRILAAVC…ELEAVCTEFG (78 aa)) constitute a Carrier domain. Ser35 carries the O-(pantetheine 4'-phosphoryl)serine modification.

It belongs to the acyl carrier protein (ACP) family. It depends on pantetheine 4'-phosphate as a cofactor.

It participates in lipid metabolism; fatty acid metabolism. Acyl-carrier protein (ACP) involved in the biosynthesis of a unique class of isonitrile lipopeptides (INLPs) that seem to play a role in metal acquisition. Is the dedicated ACP for the loading of activated acyl groups catalyzed by FadD10. This Mycobacterium bovis (strain ATCC BAA-935 / AF2122/97) protein is Acyl carrier protein BQ2027_MB0103.